We begin with the raw amino-acid sequence, 359 residues long: Ornithine cyclodeaminase (359 aa).

Arg-53 and Lys-77 together coordinate L-ornithine. Residues Thr-92, Arg-120, 147–148, Asp-169, Thr-209, 232–235, Lys-239, and Ser-300 each bind NAD(+); these read AQ and VGGD. Arg-120 lines the L-ornithine pocket. Position 235 (Asp-235) interacts with L-ornithine. Asp-235 functions as the Proton donor/acceptor in the catalytic mechanism. Val-301 provides a ligand contact to L-ornithine.

The protein belongs to the ornithine cyclodeaminase/mu-crystallin family. Requires NAD(+) as cofactor.

The enzyme catalyses L-ornithine = L-proline + NH4(+). It functions in the pathway amino-acid biosynthesis; L-proline biosynthesis; L-proline from L-ornithine: step 1/1. Its function is as follows. Catalyzes the conversion of L-ornithine into L-proline with release of ammonia. The chain is Ornithine cyclodeaminase from Brucella abortus biovar 1 (strain 9-941).